We begin with the raw amino-acid sequence, 353 residues long: uncharacterized protein (353 aa).

A compositionally biased stretch (polar residues) spans 233 to 245 (ASCSNNEPSASLE). The tract at residues 233–265 (ASCSNNEPSASLESESRHFSPVNSLSPSSLSTD) is disordered. Over residues 252–263 (SPVNSLSPSSLS) the composition is skewed to low complexity.

This is an uncharacterized protein from Saccharomyces cerevisiae (strain ATCC 204508 / S288c) (Baker's yeast).